The primary structure comprises 439 residues: GTPase Der (439 aa).

EngA-type G domains follow at residues 2-167 and 182-358; these read PTVL…ESKG and IRVS…KSLH. GTP is bound by residues 8–15, 55–59, 118–121, 188–195, 235–239, and 301–304; these read GKSNVGKS, DTGGI, NKSE, GRPNAGKS, DTAGL, and NKID. The KH-like domain maps to 359–439; sequence YRVQTSAVNS…PIFLKFKSRH (81 aa).

The protein belongs to the TRAFAC class TrmE-Era-EngA-EngB-Septin-like GTPase superfamily. EngA (Der) GTPase family. In terms of assembly, associates with the 50S ribosomal subunit.

GTPase that plays an essential role in the late steps of ribosome biogenesis. This is GTPase Der from Thermosipho africanus (strain TCF52B).